Reading from the N-terminus, the 329-residue chain is Ribosomal RNA small subunit methyltransferase H (329 aa).

S-adenosyl-L-methionine contacts are provided by residues 46–48, Asp-65, Phe-92, Asp-113, and His-120; that span reads GGH. The tract at residues 295–329 is disordered; that stretch reads RGAERPSPAEVAANPRAASARLRAAEKIRDTREAA. Basic and acidic residues predominate over residues 317-329; the sequence is RAAEKIRDTREAA.

Belongs to the methyltransferase superfamily. RsmH family.

The protein localises to the cytoplasm. The enzyme catalyses cytidine(1402) in 16S rRNA + S-adenosyl-L-methionine = N(4)-methylcytidine(1402) in 16S rRNA + S-adenosyl-L-homocysteine + H(+). Functionally, specifically methylates the N4 position of cytidine in position 1402 (C1402) of 16S rRNA. This Acidothermus cellulolyticus (strain ATCC 43068 / DSM 8971 / 11B) protein is Ribosomal RNA small subunit methyltransferase H.